Here is a 188-residue protein sequence, read N- to C-terminus: Phosphatidylinositol N-acetylglucosaminyltransferase subunit H (188 aa).

This sequence belongs to the PIGH family. Component of the glycosylphosphatidylinositol-N-acetylglucosaminyltransferase (GPI-GnT) complex composed at least by PIGA, PIGC, PIGH, PIGP, PIGQ, PIGY and DPM2. Interacts with PIGQ.

It localises to the cytoplasm. It functions in the pathway glycolipid biosynthesis; glycosylphosphatidylinositol-anchor biosynthesis. Its function is as follows. Part of the glycosylphosphatidylinositol-N-acetylglucosaminyltransferase (GPI-GnT) complex that catalyzes the transfer of N-acetylglucosamine from UDP-N-acetylglucosamine to phosphatidylinositol and participates in the first step of GPI biosynthesis. The protein is Phosphatidylinositol N-acetylglucosaminyltransferase subunit H of Mus musculus (Mouse).